A 247-amino-acid chain; its full sequence is tRNA pseudouridine synthase A 1 (247 aa).

The active-site Nucleophile is Asp53. Tyr111 contributes to the substrate binding site.

It belongs to the tRNA pseudouridine synthase TruA family. Homodimer.

It carries out the reaction uridine(38/39/40) in tRNA = pseudouridine(38/39/40) in tRNA. Formation of pseudouridine at positions 38, 39 and 40 in the anticodon stem and loop of transfer RNAs. This is tRNA pseudouridine synthase A 1 from Bacillus cereus (strain ZK / E33L).